Reading from the N-terminus, the 510-residue chain is Probable ADP-ribosylation factor-binding protein C1F3.05 (510 aa).

One can recognise a VHS domain in the interval 14–150; it reads ATDQFNLEPN…LMAFRGYKFP (137 aa). The GAT domain occupies 177 to 301; the sequence is LEAHKAKLQE…VIEECSNSDL (125 aa). A GAE domain is found at 391–510; that stretch reads TNSSLTSILQ…VEQGESHLPL (120 aa).

The protein localises to the golgi apparatus. Its subcellular location is the trans-Golgi network. May play a role in the regulation of membrane traffic through the trans-Golgi network. This chain is Probable ADP-ribosylation factor-binding protein C1F3.05, found in Schizosaccharomyces pombe (strain 972 / ATCC 24843) (Fission yeast).